We begin with the raw amino-acid sequence, 117 residues long: Large ribosomal subunit protein uL18 (117 aa).

The protein belongs to the universal ribosomal protein uL18 family. As to quaternary structure, part of the 50S ribosomal subunit; part of the 5S rRNA/L5/L18/L25 subcomplex. Contacts the 5S and 23S rRNAs.

In terms of biological role, this is one of the proteins that bind and probably mediate the attachment of the 5S RNA into the large ribosomal subunit, where it forms part of the central protuberance. This is Large ribosomal subunit protein uL18 from Leuconostoc mesenteroides subsp. mesenteroides (strain ATCC 8293 / DSM 20343 / BCRC 11652 / CCM 1803 / JCM 6124 / NCDO 523 / NBRC 100496 / NCIMB 8023 / NCTC 12954 / NRRL B-1118 / 37Y).